Reading from the N-terminus, the 507-residue chain is Light-independent protochlorophyllide reductase subunit B (507 aa).

Residue Asp36 participates in [4Fe-4S] cluster binding. Asp293 functions as the Proton donor in the catalytic mechanism. 428–429 (GM) is a binding site for substrate.

It belongs to the ChlB/BchB/BchZ family. In terms of assembly, protochlorophyllide reductase is composed of three subunits; ChlL, ChlN and ChlB. Forms a heterotetramer of two ChlB and two ChlN subunits. The cofactor is [4Fe-4S] cluster.

It localises to the plastid. The protein localises to the chloroplast. The catalysed reaction is chlorophyllide a + oxidized 2[4Fe-4S]-[ferredoxin] + 2 ADP + 2 phosphate = protochlorophyllide a + reduced 2[4Fe-4S]-[ferredoxin] + 2 ATP + 2 H2O. It participates in porphyrin-containing compound metabolism; chlorophyll biosynthesis (light-independent). In terms of biological role, component of the dark-operative protochlorophyllide reductase (DPOR) that uses Mg-ATP and reduced ferredoxin to reduce ring D of protochlorophyllide (Pchlide) to form chlorophyllide a (Chlide). This reaction is light-independent. The NB-protein (ChlN-ChlB) is the catalytic component of the complex. This Porphyra purpurea (Red seaweed) protein is Light-independent protochlorophyllide reductase subunit B.